Consider the following 267-residue polypeptide: MDEGGGAGAAAAAAGNAAGAAVHHNARSAEDVFRDFRARRAGIVKALTTDVEKFYRQCDPEKENLCLYGLPNETWDVTLPAEEVPPELPEPALGINFARDGMIEKDWLSLVAVHSDAWLLSVAFYFGARFGFDKEARRRLFTMINGLPTVYEVVTGIAKKQTKVSNGSSKSNKSNPKPSKQSNSNSKPAKPPQPKDEEDSGPEGTEDEDQAYMCGACGETYANGEFWICCDVCEKWFHGKCVRITPAKAEHIKQYKCPGCSSKRSRE.

Residues 162-207 (TKVSNGSSKSNKSNPKPSKQSNSNSKPAKPPQPKDEEDSGPEGTED) form a disordered region. The span at 165-188 (SNGSSKSNKSNPKPSKQSNSNSKP) shows a compositional bias: low complexity. The span at 196–207 (DEEDSGPEGTED) shows a compositional bias: acidic residues. Residues 211–263 (AYMCGACGETYANGEFWICCDVCEKWFHGKCVRITPAKAEHIKQYKCPGCSSK) form a PHD-type zinc finger.

It belongs to the Alfin family. As to quaternary structure, interacts with H3K4me3 and to a lesser extent with H3K4me2.

The protein localises to the nucleus. In terms of biological role, histone-binding component that specifically recognizes H3 tails trimethylated on 'Lys-4' (H3K4me3), which mark transcription start sites of virtually all active genes. The chain is PHD finger protein ALFIN-LIKE 7 from Oryza sativa subsp. japonica (Rice).